The sequence spans 198 residues: MEIIALGVEPRIIRKKEAAKLRKTGIVPAVIYHKGEETISVSVNEIALKKLVHSAESHIIDLKFPDGKTVRSFIKDVQFDPVTDRIIHTDFQLFSADELVEMDVPVGTTGDAVGVEKGGRIQIIKHALTLKGMPADMPDHFLIDCTNLEIGHSIHVREIPMDARPGLTIMDDPDTPVVTIVAPKKEAEPAAETAVSAS.

Belongs to the bacterial ribosomal protein bL25 family. CTC subfamily. In terms of assembly, part of the 50S ribosomal subunit; part of the 5S rRNA/L5/L18/L25 subcomplex. Contacts the 5S rRNA. Binds to the 5S rRNA independently of L5 and L18.

Its function is as follows. This is one of the proteins that binds to the 5S RNA in the ribosome where it forms part of the central protuberance. The chain is Large ribosomal subunit protein bL25 from Chlorobium phaeobacteroides (strain DSM 266 / SMG 266 / 2430).